Reading from the N-terminus, the 555-residue chain is Glutamate--tRNA ligase (555 aa).

Residues 100–110 (PNPSGPLHIGH) carry the 'HIGH' region motif.

The protein belongs to the class-I aminoacyl-tRNA synthetase family. Glutamate--tRNA ligase type 2 subfamily.

The protein localises to the cytoplasm. It carries out the reaction tRNA(Glu) + L-glutamate + ATP = L-glutamyl-tRNA(Glu) + AMP + diphosphate. In terms of biological role, catalyzes the attachment of glutamate to tRNA(Glu) in a two-step reaction: glutamate is first activated by ATP to form Glu-AMP and then transferred to the acceptor end of tRNA(Glu). This chain is Glutamate--tRNA ligase, found in Methanococcus maripaludis (strain DSM 14266 / JCM 13030 / NBRC 101832 / S2 / LL).